Reading from the N-terminus, the 808-residue chain is Leucine-rich repeat-containing protein 41 (808 aa).

Residues 45 to 54 form an interaction with Elongin BC complex region; it reads ALFELCGRAV. Phosphoserine occurs at positions 155, 276, and 326. Disordered stretches follow at residues 269 to 289 and 304 to 404; these read ASRG…SRRP and TRRK…GSGA. Phosphothreonine is present on Thr327. Over residues 357–379 the composition is skewed to low complexity; that stretch reads PSSAPTAASSSTSSKRAPASSVS. Phosphoserine is present on Ser369. The span at 383–397 shows a compositional bias: basic residues; it reads PLKRFKRATGKKGPR. 7 LRR repeats span residues 483–503, 514–526, 527–551, 609–631, 632–655, 697–724, and 727–748; these read WVSL…IFRL, AGCR…LSDL, FSPL…VLSI, SGSL…FGLV, LQTL…LADC, NSTL…VFSE, and SSSL…LLEF.

In terms of assembly, part of an E3 ubiquitin-protein ligase complex with Elongin BC (ELOB and ELOC), RBX1 and CUL5. Component of a probable ECS(LRRC41) complex which contains CUL5, RNF7/RBX2, Elongin BC and LRRC41. Interacts with CUL5, RNF7, ELOB and ELOC.

It functions in the pathway protein modification; protein ubiquitination. Functionally, probable substrate recognition component of an ECS (Elongin BC-CUL2/5-SOCS-box protein) E3 ubiquitin ligase complex which mediates the ubiquitination and subsequent proteasomal degradation of target proteins. The protein is Leucine-rich repeat-containing protein 41 (Lrrc41) of Rattus norvegicus (Rat).